A 464-amino-acid polypeptide reads, in one-letter code: Argininosuccinate lyase (464 aa).

This sequence belongs to the lyase 1 family. Argininosuccinate lyase subfamily.

It localises to the cytoplasm. It carries out the reaction 2-(N(omega)-L-arginino)succinate = fumarate + L-arginine. Its pathway is amino-acid biosynthesis; L-arginine biosynthesis; L-arginine from L-ornithine and carbamoyl phosphate: step 3/3. The protein is Argininosuccinate lyase of Desulfotalea psychrophila (strain LSv54 / DSM 12343).